A 350-amino-acid polypeptide reads, in one-letter code: Protein RecA (350 aa).

67–74 (GPESSGKT) serves as a coordination point for ATP.

Belongs to the RecA family.

It localises to the cytoplasm. Functionally, can catalyze the hydrolysis of ATP in the presence of single-stranded DNA, the ATP-dependent uptake of single-stranded DNA by duplex DNA, and the ATP-dependent hybridization of homologous single-stranded DNAs. It interacts with LexA causing its activation and leading to its autocatalytic cleavage. This is Protein RecA from Chlamydia caviae (strain ATCC VR-813 / DSM 19441 / 03DC25 / GPIC) (Chlamydophila caviae).